Consider the following 529-residue polypeptide: Peptide chain release factor 3 (529 aa).

The 269-residue stretch at 7–275 folds into the tr-type G domain; it reads EQRRTFGIIS…AVVELAPSPR (269 aa). GTP contacts are provided by residues 16 to 23, 84 to 88, and 138 to 141; these read SHPDAGKT, DTPGH, and NKLD.

The protein belongs to the TRAFAC class translation factor GTPase superfamily. Classic translation factor GTPase family. PrfC subfamily.

It is found in the cytoplasm. In terms of biological role, increases the formation of ribosomal termination complexes and stimulates activities of RF-1 and RF-2. It binds guanine nucleotides and has strong preference for UGA stop codons. It may interact directly with the ribosome. The stimulation of RF-1 and RF-2 is significantly reduced by GTP and GDP, but not by GMP. The polypeptide is Peptide chain release factor 3 (Syntrophus aciditrophicus (strain SB)).